Consider the following 219-residue polypeptide: Orotate phosphoribosyltransferase (219 aa).

Lysine 26 is a binding site for 5-phospho-alpha-D-ribose 1-diphosphate. 34-35 contacts orotate; the sequence is FF. 5-phospho-alpha-D-ribose 1-diphosphate-binding positions include 72–73, arginine 98, lysine 99, lysine 102, histidine 104, and 124–132; these read YK and DDVITAGTA. Threonine 128 and arginine 156 together coordinate orotate.

It belongs to the purine/pyrimidine phosphoribosyltransferase family. PyrE subfamily. Homodimer. The cofactor is Mg(2+).

The enzyme catalyses orotidine 5'-phosphate + diphosphate = orotate + 5-phospho-alpha-D-ribose 1-diphosphate. It participates in pyrimidine metabolism; UMP biosynthesis via de novo pathway; UMP from orotate: step 1/2. In terms of biological role, catalyzes the transfer of a ribosyl phosphate group from 5-phosphoribose 1-diphosphate to orotate, leading to the formation of orotidine monophosphate (OMP). The polypeptide is Orotate phosphoribosyltransferase (Xanthomonas euvesicatoria pv. vesicatoria (strain 85-10) (Xanthomonas campestris pv. vesicatoria)).